Consider the following 436-residue polypeptide: UDP-N-acetylglucosamine 1-carboxyvinyltransferase (436 aa).

A phosphoenolpyruvate-binding site is contributed by 22-23; sequence KN. Arg-96 is a UDP-N-acetyl-alpha-D-glucosamine binding site. Residue Cys-120 is the Proton donor of the active site. Cys-120 carries the post-translational modification 2-(S-cysteinyl)pyruvic acid O-phosphothioketal. UDP-N-acetyl-alpha-D-glucosamine contacts are provided by residues 125 to 129, Asp-309, and Ile-331; that span reads RPIDL.

It belongs to the EPSP synthase family. MurA subfamily.

Its subcellular location is the cytoplasm. The catalysed reaction is phosphoenolpyruvate + UDP-N-acetyl-alpha-D-glucosamine = UDP-N-acetyl-3-O-(1-carboxyvinyl)-alpha-D-glucosamine + phosphate. It participates in cell wall biogenesis; peptidoglycan biosynthesis. Functionally, cell wall formation. Adds enolpyruvyl to UDP-N-acetylglucosamine. In Acidobacterium capsulatum (strain ATCC 51196 / DSM 11244 / BCRC 80197 / JCM 7670 / NBRC 15755 / NCIMB 13165 / 161), this protein is UDP-N-acetylglucosamine 1-carboxyvinyltransferase.